We begin with the raw amino-acid sequence, 322 residues long: Serine protease 38 (322 aa).

The N-terminal stretch at 1–28 (MAALTSGLGVLGYLLFPLLLASPTWVTS) is a signal peptide. A propeptide spans 29–55 (VSRRHPKSQANSLSGDVACGQPVLQGK) (activation peptide). The region spanning 56–289 (LLGGEFARDR…FLSWIRYHLQ (234 aa)) is the Peptidase S1 domain. Cysteine 81 and cysteine 97 are joined by a disulfide. Catalysis depends on charge relay system residues histidine 96 and aspartate 146. Asparagine 176 is a glycosylation site (N-linked (GlcNAc...) asparagine). 3 disulfides stabilise this stretch: cysteine 179–cysteine 247, cysteine 210–cysteine 226, and cysteine 237–cysteine 265. The Charge relay system role is filled by serine 241. N-linked (GlcNAc...) asparagine glycosylation is found at asparagine 250 and asparagine 276.

Belongs to the peptidase S1 family.

The protein localises to the secreted. This is Serine protease 38 (Prss38) from Mus musculus (Mouse).